The sequence spans 281 residues: 16S rRNA (guanine(1405)-N(7))-methyltransferase (281 aa).

S-adenosyl-L-methionine-binding positions include tyrosine 60, 105 to 107 (HTS), arginine 111, glycine 136, aspartate 160, 186 to 187 (QG), phenylalanine 203, and glutamine 212.

The protein belongs to the methyltransferase superfamily. Aminoglycoside resistance family.

The enzyme catalyses guanosine(1405) in 16S rRNA + S-adenosyl-L-methionine = N(7)-methylguanosine(1405) in 16S rRNA + S-adenosyl-L-homocysteine. Specifically methylates the N(7) position of guanine 1405 in 16S rRNA. Confers resistance to various aminoglycosides, including gentamicin and kanamycin. The sequence is that of 16S rRNA (guanine(1405)-N(7))-methyltransferase (rmtC) from Proteus mirabilis.